The following is a 209-amino-acid chain: Aspartate kinase-like protein lolA1 (209 aa).

Residues 1–11 (MLDESPMRKGD) show a composition bias toward basic and acidic residues. The tract at residues 1-27 (MLDESPMRKGDSVSNDQSNPESNASVS) is disordered. Polar residues predominate over residues 12–27 (SVSNDQSNPESNASVS).

This sequence belongs to the aspartokinase family.

It participates in alkaloid biosynthesis. Aspartokinase-like protein; part of the gene cluster that mediates the biosynthesis of loline alkaloids, potent insecticidal agents composed of a pyrrolizidine ring system and an uncommon ether bridge linking carbons 2 and 7. Lolines are structurally differentiated by the various modifications of the L-amino group and include norloline, loline, N-methylloline, N-acetylloline, N-acetylnorloline, and N-formylloline. The first committed step is the condensation of O-acetyl-L-homoserine (derived from L-aspartic acid) and L-proline, probably catalyzed by the gamma-type pyridoxal 5'-phosphate(PLP)-dependent enzyme lolC, to give the diamino diacid, NACPP. Ensuing cyclization, decarboxylation, and acetylation steps yield 1-exo-acetamidopyrrolizidine (AcAP). LolO is required for installation of the ether bridge upon the pathway intermediate, 1-exo-acetamidopyrrolizidine (AcAP). In sequential 2-oxoglutarate- and O(2)-consuming steps, lolO removes hydrogens from C2 and C7 of AcAP to form both carbon-oxygen bonds in N-acetylnorloline (NANL), the precursor to all other lolines. The enzymes lolD, lolE, lolF and lolT have also been proposed to be involved in the ether-bridge installation. Further processing of the exocyclic moiety of NANL by fungal N-acetamidase (LolN), methyltransferase (LolM), and cytochrome P450 (LolP) enzymes, with occasional involvement of a plant acetyltransferase, generates the other known lolines. LolN transforms NANL to norlonine which is monomethylated and dimethylated to respectively lonine and N-methyllonine (NML) by lolM. LolP catalyzes hydroxylation of the methyl group in N-methylloline (NML) and further oxygenation to N-formylloline (NFL). A plant acetyltransferase is responsible for the acetylation of loline to form N-acetylloline (NAL). LolA might interact with aspartate kinase to prevent feedback inhibition of its activity by these end products and thereby promote production of L-homoserine from L-aspartate. This chain is Aspartate kinase-like protein lolA1, found in Epichloe uncinata (Endophyte fungus).